We begin with the raw amino-acid sequence, 277 residues long: Orotidine 5'-phosphate decarboxylase (277 aa).

Residue K93 is the Proton donor of the active site.

This sequence belongs to the OMP decarboxylase family. Type 2 subfamily.

The catalysed reaction is orotidine 5'-phosphate + H(+) = UMP + CO2. The protein operates within pyrimidine metabolism; UMP biosynthesis via de novo pathway; UMP from orotate: step 2/2. The chain is Orotidine 5'-phosphate decarboxylase from Haloarcula marismortui (strain ATCC 43049 / DSM 3752 / JCM 8966 / VKM B-1809) (Halobacterium marismortui).